The following is a 230-amino-acid chain: Ribose-5-phosphate isomerase A (230 aa).

Residues 31–34, 88–91, and 101–104 contribute to the substrate site; these read TGST, DGSD, and KGGG. Glu110 acts as the Proton acceptor in catalysis. Lys128 contributes to the substrate binding site.

This sequence belongs to the ribose 5-phosphate isomerase family. Homodimer.

The enzyme catalyses aldehydo-D-ribose 5-phosphate = D-ribulose 5-phosphate. The protein operates within carbohydrate degradation; pentose phosphate pathway; D-ribose 5-phosphate from D-ribulose 5-phosphate (non-oxidative stage): step 1/1. In terms of biological role, catalyzes the reversible conversion of ribose-5-phosphate to ribulose 5-phosphate. This is Ribose-5-phosphate isomerase A from Lactobacillus acidophilus (strain ATCC 700396 / NCK56 / N2 / NCFM).